A 131-amino-acid polypeptide reads, in one-letter code: Protein NrdI (131 aa).

Belongs to the NrdI family.

Functionally, probably involved in ribonucleotide reductase function. The polypeptide is Protein NrdI (Bacillus licheniformis (strain ATCC 14580 / DSM 13 / JCM 2505 / CCUG 7422 / NBRC 12200 / NCIMB 9375 / NCTC 10341 / NRRL NRS-1264 / Gibson 46)).